The primary structure comprises 73 residues: Omega-hexatoxin-Ar1b (73 aa).

A signal peptide spans 1–22; that stretch reads MNTATGFIVLLVLATVLGCIEA. Residues 23-37 constitute a propeptide that is removed on maturation; it reads GESHVREDAMGRARR. 3 disulfides stabilise this stretch: Cys-40–Cys-54, Cys-47–Cys-58, and Cys-53–Cys-72.

It belongs to the neurotoxin 08 (Shiva) family. 01 (omega toxin) subfamily. As to expression, expressed by the venom gland.

It is found in the secreted. Functionally, insecticidal toxin that reversibly and voltage-independently blocks both mid-low- (M-LVA) and high-voltage-activated (HVA) calcium channels (Cav) in cockroach DUM neurons. Also causes a modest block of insect sodium channel currents (Nav). Induces potent excitatory symptoms, followed by flaccid paralysis leading to death in house crickets. The protein is Omega-hexatoxin-Ar1b of Atrax robustus (Sydney funnel-web spider).